Consider the following 439-residue polypeptide: MQTQGEASNPLERNIELSVSREKVEAEVGVRLKRLAPKVKVQGFRPGKVPLKIVAQQYGHQVEHEVLGELLQQQFNDAVNQENYRVAGIPGFESRNSDANGATSYEFRATFEIYPDIELGDLSSITVNKPVLQIGDAEIQKTLDILRKQRATYEPTDRPAQTGDRVTIDYRGVLDGEGFPGGQADDYSVILGNGHLLEDFESSILGMTAGQEKTFDMTFPADYPGKDVAGKKVSFTIRLNKLEAPKLPEVDGEFAKSLGVAEGDIDKMRSEIKANLQREISQRIRTKLKEQVMQSLLDKVLIQVPKVLIRQEADRLAEEMQNSRAARGFRKDQSLSGDVFLEKAERRVRLGLILSKLIDTHELSVKPEQVRSFIEEYAQGYENPEQVIKWHYASPERLKEIEPLILEDNAVSWLLDKAKIIDQSVTFDELMGYSHATNV.

A PPIase FKBP-type domain is found at 163 to 248 (GDRVTIDYRG…LNKLEAPKLP (86 aa)).

It belongs to the FKBP-type PPIase family. Tig subfamily.

It localises to the cytoplasm. The enzyme catalyses [protein]-peptidylproline (omega=180) = [protein]-peptidylproline (omega=0). In terms of biological role, involved in protein export. Acts as a chaperone by maintaining the newly synthesized protein in an open conformation. Functions as a peptidyl-prolyl cis-trans isomerase. In Nitrosomonas europaea (strain ATCC 19718 / CIP 103999 / KCTC 2705 / NBRC 14298), this protein is Trigger factor.